Reading from the N-terminus, the 351-residue chain is Probable protein phosphatase 2C 41 (351 aa).

A PPM-type phosphatase domain is found at 62–348; it reads FTSICSNRGE…DDISVLCLFF (287 aa). The Mn(2+) site is built by aspartate 98, glycine 99, aspartate 293, and aspartate 339.

This sequence belongs to the PP2C family. It depends on Mg(2+) as a cofactor. Mn(2+) is required as a cofactor.

The catalysed reaction is O-phospho-L-seryl-[protein] + H2O = L-seryl-[protein] + phosphate. It carries out the reaction O-phospho-L-threonyl-[protein] + H2O = L-threonyl-[protein] + phosphate. The sequence is that of Probable protein phosphatase 2C 41 from Arabidopsis thaliana (Mouse-ear cress).